A 245-amino-acid chain; its full sequence is Eukaryotic translation initiation factor 6 (245 aa).

This sequence belongs to the eIF-6 family. Monomer. Associates with the 60S ribosomal subunit.

It is found in the cytoplasm. Its subcellular location is the nucleus. The protein resides in the nucleolus. Its function is as follows. Binds to the 60S ribosomal subunit and prevents its association with the 40S ribosomal subunit to form the 80S initiation complex in the cytoplasm. May also be involved in ribosome biogenesis. In Danio rerio (Zebrafish), this protein is Eukaryotic translation initiation factor 6 (eif6).